We begin with the raw amino-acid sequence, 232 residues long: LexA repressor (232 aa).

A DNA-binding region (H-T-H motif) is located at residues 35 to 55; that stretch reads IREIGDAAGLQSTSSVAYQLK. Residues 61 to 85 show a composition bias toward basic and acidic residues; it reads GFLRRDPNKPRAVDVRHLPETESRS. The disordered stretch occupies residues 61–104; that stretch reads GFLRRDPNKPRAVDVRHLPETESRSSKAATQAKSKAPQAGVHDP. The span at 86–99 shows a compositional bias: low complexity; the sequence is SKAATQAKSKAPQA. Catalysis depends on for autocatalytic cleavage activity residues serine 156 and lysine 193.

Belongs to the peptidase S24 family. In terms of assembly, homodimer.

The catalysed reaction is Hydrolysis of Ala-|-Gly bond in repressor LexA.. Represses a number of genes involved in the response to DNA damage (SOS response), including recA and lexA. In the presence of single-stranded DNA, RecA interacts with LexA causing an autocatalytic cleavage which disrupts the DNA-binding part of LexA, leading to derepression of the SOS regulon and eventually DNA repair. The polypeptide is LexA repressor (Corynebacterium glutamicum (strain ATCC 13032 / DSM 20300 / JCM 1318 / BCRC 11384 / CCUG 27702 / LMG 3730 / NBRC 12168 / NCIMB 10025 / NRRL B-2784 / 534)).